We begin with the raw amino-acid sequence, 188 residues long: Elongation factor P (188 aa).

The protein belongs to the elongation factor P family.

It is found in the cytoplasm. It participates in protein biosynthesis; polypeptide chain elongation. In terms of biological role, involved in peptide bond synthesis. Stimulates efficient translation and peptide-bond synthesis on native or reconstituted 70S ribosomes in vitro. Probably functions indirectly by altering the affinity of the ribosome for aminoacyl-tRNA, thus increasing their reactivity as acceptors for peptidyl transferase. The protein is Elongation factor P of Gluconacetobacter diazotrophicus (strain ATCC 49037 / DSM 5601 / CCUG 37298 / CIP 103539 / LMG 7603 / PAl5).